Here is a 188-residue protein sequence, read N- to C-terminus: Thymidine kinase (188 aa).

17–24 (GPMFAGKT) lines the ATP pocket. Glu-92 (proton acceptor) is an active-site residue. Phe-121 lines the substrate pocket. Residues Cys-146 and Cys-149 each contribute to the Zn(2+) site. Substrate is bound at residue 166–170 (LILAG). Residues Cys-179 and Cys-182 each contribute to the Zn(2+) site.

The protein belongs to the thymidine kinase family.

It carries out the reaction thymidine + ATP = dTMP + ADP + H(+). Functionally, phosphorylates thymidine. ASFV replicates in the cytoplasm of infected cells and contains genes encoding a number of enzymes needed for DNA synthesis, including thymidine kinase. Important for growth in swine macrophages in vitro and is a virus virulence factor in swine. In Ornithodoros (relapsing fever ticks), this protein is Thymidine kinase.